A 344-amino-acid chain; its full sequence is RNA-binding protein squid (344 aa).

Residues 1–55 (MAENKQVDTEINGEDFTKDVTADGPGSENGDAGAAGSTNGSSDNQSAASGQRDDD) are disordered. Polar residues predominate over residues 36-49 (GSTNGSSDNQSAAS). 2 RRM domains span residues 56 to 138 (RKLF…HGKI) and 136 to 213 (GKIF…RATP). Ser148 is modified (phosphoserine). Disordered stretches follow at residues 214–238 (KPEN…RGGY) and 301–344 (GGGG…HQPY). An M9-like motif region spans residues 215–254 (PENQMMGGMRGGPRGGMRGGRGGYGGRGGYNNQWDGQGSY). Gly residues-rich tracts occupy residues 222-238 (GMRG…RGGY) and 301-337 (GGGG…GGGR). The tract at residues 300–338 (GGGGGGNMGGGRGGPRGGGGPKGGGGFNGGKQRGGGGRQ) is M9 motif.

In terms of assembly, interacts with bru1/Bruno; the interaction is direct but weak, and may play a role in regulation of grk mRNA localization and translation. As to quaternary structure, interacts (probably via M9 and M9-like motifs) with Tnpo/Transportin; the interaction is direct and is involved in nuclear localization. Interacts with fs(1)K10 (via N-terminus); may be involved in localization of sqd in the oocyte during oogenesis. Interacts (via C-terminus) with Hrb27C; the interaction is RNA dependent. Does not interact with Tnpo/Transportin. Interacts with fs(1)K10 (via N-terminus); may be involved in localization of sqd in the oocyte during oogenesis. In terms of assembly, interacts (probably via M9-like motif) with Tnpo/Transportin; the interaction is direct and is involved in nuclear localization. Interacts with fs(1)K10 (via N-terminus); may be involved in localization of sqd in the oocyte during oogenesis.

It is found in the nucleus. Its subcellular location is the cytoplasm. Functionally, component of ribonucleosomes. Could be needed to organize a concentration gradient of a dorsalizing morphogen (Dm) originating in the germinal vesicle. At least one of the isoforms is essential in somatic tissues. Interacts with grk mRNA (via 3' UTR) and involved in its localization to the dorsal anterior region of the oocyte during dorsal-ventral axis determination; may function as a ribonuclear protein complex together with otu and Hrb27C. Required for polytene chromosome dispersal in nurse cells during oogenesis; nuclear isoforms play a greater role in this than cytoplasmic isoforms. In terms of biological role, required nonredundantly with isoform A/sqdA for dorsoventral pattern determination during oogenesis. May be important in somatic tissues. Required nonredundantly with isoform B/SqdS for dorsoventral pattern determination during oogenesis. Its function is as follows. May lack a role in dorsoventral pattern determination during oogenesis. May be important in somatic tissues. This is RNA-binding protein squid from Drosophila melanogaster (Fruit fly).